Reading from the N-terminus, the 377-residue chain is G-protein coupled receptor 54 (377 aa).

Topologically, residues Met-1–Pro-49 are extracellular. Residues Asn-9, Asn-17, and Asn-22 are each glycosylated (N-linked (GlcNAc...) asparagine). Residues Leu-50–Ile-70 form a helical membrane-spanning segment. Residues Ser-71–Asp-91 lie on the Cytoplasmic side of the membrane. Residues Ile-92–Ile-112 form a helical membrane-spanning segment. Over Phe-113–Lys-119 the chain is Extracellular. Cysteines 118 and 198 form a disulfide. A helical transmembrane segment spans residues Phe-120 to Ser-140. At Gly-141–Lys-160 the chain is on the cytoplasmic side. Residues Val-161–Leu-181 traverse the membrane as a helical segment. Residues Met-182 to Arg-209 are Extracellular-facing. Residues Ala-210 to Cys-230 form a helical membrane-spanning segment. The Cytoplasmic portion of the chain corresponds to Tyr-231 to Met-269. Residues Val-270–Phe-290 form a helical membrane-spanning segment. The Extracellular segment spans residues Gln-291–Lys-305. A helical membrane pass occupies residues Ile-306–Met-328. At Gly-329 to Asn-377 the chain is on the cytoplasmic side.

It belongs to the G-protein coupled receptor 1 family. In terms of tissue distribution, expressed in a significantly high percentage (45-60%) of mature GnRH1, GnRH2, and GnRH3 neurons and in immature GnRH3 neurons, which had migrated to the vicinity of their final locations in the brain. Only 5% of immature GnRH1 and GnRH2 neurons have receptor transcripts.

Its subcellular location is the cell membrane. In terms of biological role, receptor speculated to be essential for sexual development. May regulate gonadotropin-releasing hormone (GnRH) secretion. The receptor expression could be a 'stop signal' for GnRH1, GnRH2, and GnRH3 neuronal migration, leading to suppression of cell growth and modulation of GnRH secretion, which is important for normal sexual development. The protein is G-protein coupled receptor 54 (gpr54) of Oreochromis niloticus (Nile tilapia).